The following is a 355-amino-acid chain: Spore germination protein XB (355 aa).

10 helical membrane-spanning segments follow: residues 2 to 24 (VNFFQIALVLIGSTGIINHVIII), 34 to 56 (DSWISIIILSLVYIIWIPCVFIV), 69 to 91 (LMRNYGGFITYPLLSIIVLYLII), 106 to 128 (FYLPETPRILLGVLLSIICFYNI), 135 to 157 (IALTTGILLPVVFLLGFFVMIAN), 180 to 197 (GMIYPAAGFVELIFILFL), 210 to 232 (LIIVGIILAGITLGPTIAAIVEF), 265 to 287 (VYQWLVGVFIRISLVIFLIPDVL), 299 to 321 (ISILLICMVIICILPISDASFYW), and 326 to 348 (VFLPISAIGLFLFSMLLLVFVWV).

This sequence belongs to the amino acid-polyamine-organocation (APC) superfamily. Spore germination protein (SGP) (TC 2.A.3.9) family.

Its subcellular location is the cell membrane. In terms of biological role, may allow B.anthracis to germinate within phagocytic cells and therefore involved in virulence. This is Spore germination protein XB (gerXB) from Bacillus anthracis.